A 66-amino-acid polypeptide reads, in one-letter code: Large ribosomal subunit protein uL29 (66 aa).

This sequence belongs to the universal ribosomal protein uL29 family.

This chain is Large ribosomal subunit protein uL29, found in Chelativorans sp. (strain BNC1).